The following is a 283-amino-acid chain: Elongation factor Ts (283 aa).

Residues Thr79–Val82 are involved in Mg(2+) ion dislocation from EF-Tu.

It belongs to the EF-Ts family.

Its subcellular location is the cytoplasm. Associates with the EF-Tu.GDP complex and induces the exchange of GDP to GTP. It remains bound to the aminoacyl-tRNA.EF-Tu.GTP complex up to the GTP hydrolysis stage on the ribosome. The chain is Elongation factor Ts from Shewanella amazonensis (strain ATCC BAA-1098 / SB2B).